The chain runs to 511 residues: Tryptophan 5-halogenase PyrH (511 aa).

Residues G10, A13, S36, V39, I42, V44, and A47 each coordinate FAD. S50 contacts L-tryptophan. K75 is a catalytic residue. L-tryptophan-binding residues include P93, Q160, and Q163. The FAD site is built by V195 and L345. Positions 356 and 357 each coordinate chloride. I358 is a binding site for FAD. Positions 450 and 454 each coordinate L-tryptophan.

Belongs to the flavin-dependent halogenase family. Bacterial tryptophan halogenase subfamily. Homodimer.

It catalyses the reaction L-tryptophan + FADH2 + chloride + O2 = 5-chloro-L-tryptophan + FAD + 2 H2O. It participates in antibiotic biosynthesis. In terms of biological role, involved in the biosynthesis of the antibiotic compound pyrroindomycin B. Catalyzes the chlorination of tryptophan (Trp) at C5 position to yield 5-chloro-L-tryptophan. It is also able to use bromide ions to generate monobrominated Trp, but the brominating activity is only about 75% of the chlorinating activity. The chain is Tryptophan 5-halogenase PyrH from Streptomyces rugosporus.